The primary structure comprises 249 residues: Ribonuclease 3 (249 aa).

In terms of domain architecture, RNase III spans 20 to 149 (FKKFQERISV…FIGALYLDQG (130 aa)). Position 62 (glutamate 62) interacts with Mg(2+). Aspartate 66 is a catalytic residue. 2 residues coordinate Mg(2+): aspartate 135 and glutamate 138. Glutamate 138 is a catalytic residue. A DRBM domain is found at 175-244 (DFKSQLQEFV…AQEALAKLQK (70 aa)). Residues 225–249 (RSKKEAEQHAAQEALAKLQKHHMKQ) are disordered.

It belongs to the ribonuclease III family. In terms of assembly, homodimer. Mg(2+) is required as a cofactor.

Its subcellular location is the cytoplasm. It catalyses the reaction Endonucleolytic cleavage to 5'-phosphomonoester.. In terms of biological role, digests double-stranded RNA. Involved in the processing of primary rRNA transcript to yield the immediate precursors to the large and small rRNAs (23S and 16S). Processes some mRNAs, and tRNAs when they are encoded in the rRNA operon. Processes pre-crRNA and tracrRNA of type II CRISPR loci if present in the organism. This Bacillus licheniformis (strain ATCC 14580 / DSM 13 / JCM 2505 / CCUG 7422 / NBRC 12200 / NCIMB 9375 / NCTC 10341 / NRRL NRS-1264 / Gibson 46) protein is Ribonuclease 3.